A 216-amino-acid chain; its full sequence is Peptide methionine sulfoxide reductase MsrA (216 aa).

Cys-54 is an active-site residue.

Belongs to the MsrA Met sulfoxide reductase family.

It carries out the reaction L-methionyl-[protein] + [thioredoxin]-disulfide + H2O = L-methionyl-(S)-S-oxide-[protein] + [thioredoxin]-dithiol. It catalyses the reaction [thioredoxin]-disulfide + L-methionine + H2O = L-methionine (S)-S-oxide + [thioredoxin]-dithiol. In terms of biological role, has an important function as a repair enzyme for proteins that have been inactivated by oxidation. Catalyzes the reversible oxidation-reduction of methionine sulfoxide in proteins to methionine. The protein is Peptide methionine sulfoxide reductase MsrA of Xanthomonas campestris pv. phaseoli.